A 397-amino-acid polypeptide reads, in one-letter code: Succinate--CoA ligase [ADP-forming] subunit beta (397 aa).

The region spanning 9–254 (KALLKSFGAP…TTEEDEKEIE (246 aa)) is the ATP-grasp domain. Residues K46, 53-55 (GRG), E109, A112, and E117 each bind ATP. Residues N209 and D223 each coordinate Mg(2+). Substrate-binding positions include N274 and 331–333 (GIM).

It belongs to the succinate/malate CoA ligase beta subunit family. Heterotetramer of two alpha and two beta subunits. Requires Mg(2+) as cofactor.

It catalyses the reaction succinate + ATP + CoA = succinyl-CoA + ADP + phosphate. The enzyme catalyses GTP + succinate + CoA = succinyl-CoA + GDP + phosphate. It functions in the pathway carbohydrate metabolism; tricarboxylic acid cycle; succinate from succinyl-CoA (ligase route): step 1/1. In terms of biological role, succinyl-CoA synthetase functions in the citric acid cycle (TCA), coupling the hydrolysis of succinyl-CoA to the synthesis of either ATP or GTP and thus represents the only step of substrate-level phosphorylation in the TCA. The beta subunit provides nucleotide specificity of the enzyme and binds the substrate succinate, while the binding sites for coenzyme A and phosphate are found in the alpha subunit. The polypeptide is Succinate--CoA ligase [ADP-forming] subunit beta (Mesorhizobium japonicum (strain LMG 29417 / CECT 9101 / MAFF 303099) (Mesorhizobium loti (strain MAFF 303099))).